A 141-amino-acid polypeptide reads, in one-letter code: ATEDGKRAVPLKDYRNIGIMAHIDAGKTTTTERILFYTGRNYKIGEVHEGTATMDWMEQEQERGITITSAATTTFWDKHRINIIDTPGHVDFTLEVERALRVLDGAICLFDSVAGVEPQSETVWRQADRYGVPRICFVNKM.

The tr-type G domain maps to 12–141 (KDYRNIGIMA…VPRICFVNKM (130 aa)). GTP is bound by residues 21-28 (AHIDAGKT) and 85-89 (DTPGH).

It belongs to the TRAFAC class translation factor GTPase superfamily. Classic translation factor GTPase family. EF-G/EF-2 subfamily.

It localises to the plastid. The protein resides in the chloroplast. The protein operates within protein biosynthesis; polypeptide chain elongation. In terms of biological role, chloroplast-localized elongation factor EF-G involved in protein synthesis in plastids. Catalyzes the GTP-dependent ribosomal translocation step during translation elongation. During this step, the ribosome changes from the pre-translocational (PRE) to the post-translocational (POST) state as the newly formed A-site-bound peptidyl-tRNA and P-site-bound deacylated tRNA move to the P and E sites, respectively. Catalyzes the coordinated movement of the two tRNA molecules, the mRNA and conformational changes in the ribosome. This is Elongation factor G, chloroplastic (fusA) from Pisum sativum (Garden pea).